A 326-amino-acid polypeptide reads, in one-letter code: Tumor necrosis factor soluble receptor (326 aa).

The signal sequence occupies residues 1–16 (MFRLTLLLAYVACVYG). 4 TNFR-Cys repeats span residues 27–62 (KCRGNDYEKDGLCCTSCPPGSYASRLCGPGSDTVCS), 63–104 (PCKN…DRVC), 105–147 (DCSA…VLCT), and 148–186 (KCPRYTYSDAVSSTETCTSSFNYISVEFNLYPVNDTSCT). Intrachain disulfides connect Cys28–Cys39, Cys40–Cys53, Cys43–Cys61, Cys64–Cys79, Cys82–Cys96, Cys86–Cys104, Cys106–Cys120, Cys123–Cys146, Cys129–Cys149, and Cys164–Cys185. An N-linked (GlcNAc...) asparagine; by host glycan is attached at Asn66. 3 N-linked (GlcNAc...) asparagine; by host glycosylation sites follow: Asn181, Asn205, and Asn238.

Binds to TNF-alpha and beta. Probably prevents TNF to reach cellular target and thereby deampening the potential antiviral effects of the cytokine. The sequence is that of Tumor necrosis factor soluble receptor from Oryctolagus cuniculus (Rabbit).